The following is a 340-amino-acid chain: Ketol-acid reductoisomerase (NADP(+)) (340 aa).

One can recognise a KARI N-terminal Rossmann domain in the interval 3-182 (VTMYYEDDVE…GCARVGIIET (180 aa)). NADP(+) contacts are provided by residues 26 to 29 (YGSQ), arginine 49, serine 53, and 83 to 86 (DELQ). Residue histidine 108 is part of the active site. Glycine 134 is a binding site for NADP(+). The KARI C-terminal knotted domain occupies 183-328 (TFKEETEEDL…AELRKAMPFT (146 aa)). Residues aspartate 191, glutamate 195, glutamate 227, and glutamate 231 each contribute to the Mg(2+) site. Residue serine 252 coordinates substrate.

The protein belongs to the ketol-acid reductoisomerase family. Requires Mg(2+) as cofactor.

It catalyses the reaction (2R)-2,3-dihydroxy-3-methylbutanoate + NADP(+) = (2S)-2-acetolactate + NADPH + H(+). The enzyme catalyses (2R,3R)-2,3-dihydroxy-3-methylpentanoate + NADP(+) = (S)-2-ethyl-2-hydroxy-3-oxobutanoate + NADPH + H(+). It functions in the pathway amino-acid biosynthesis; L-isoleucine biosynthesis; L-isoleucine from 2-oxobutanoate: step 2/4. The protein operates within amino-acid biosynthesis; L-valine biosynthesis; L-valine from pyruvate: step 2/4. Its function is as follows. Involved in the biosynthesis of branched-chain amino acids (BCAA). Catalyzes an alkyl-migration followed by a ketol-acid reduction of (S)-2-acetolactate (S2AL) to yield (R)-2,3-dihydroxy-isovalerate. In the isomerase reaction, S2AL is rearranged via a Mg-dependent methyl migration to produce 3-hydroxy-3-methyl-2-ketobutyrate (HMKB). In the reductase reaction, this 2-ketoacid undergoes a metal-dependent reduction by NADPH to yield (R)-2,3-dihydroxy-isovalerate. The sequence is that of Ketol-acid reductoisomerase (NADP(+)) from Lactococcus lactis subsp. lactis (strain IL1403) (Streptococcus lactis).